The chain runs to 147 residues: Hemoglobin subunit beta (147 aa).

Val-2 is modified (N-acetylvaline). Residues 3–147 (HLTGEEKAAV…VANALAHKYH (145 aa)) enclose the Globin domain. The residue at position 13 (Thr-13) is a Phosphothreonine. The residue at position 45 (Ser-45) is a Phosphoserine. Lys-60 is modified (N6-acetyllysine). A heme b-binding site is contributed by His-64. N6-acetyllysine is present on Lys-83. His-93 serves as a coordination point for heme b. Cys-94 carries the S-nitrosocysteine modification. Lys-145 is modified (N6-acetyllysine).

This sequence belongs to the globin family. Heterotetramer of two alpha chains and two beta chains. As to expression, red blood cells.

Involved in oxygen transport from the lung to the various peripheral tissues. This chain is Hemoglobin subunit beta (HBB), found in Ailuropoda melanoleuca (Giant panda).